The primary structure comprises 129 residues: Small ribosomal subunit protein uS11 (129 aa).

It belongs to the universal ribosomal protein uS11 family. As to quaternary structure, part of the 30S ribosomal subunit. Interacts with proteins S7 and S18. Binds to IF-3.

Its function is as follows. Located on the platform of the 30S subunit, it bridges several disparate RNA helices of the 16S rRNA. Forms part of the Shine-Dalgarno cleft in the 70S ribosome. The sequence is that of Small ribosomal subunit protein uS11 from Methylorubrum populi (strain ATCC BAA-705 / NCIMB 13946 / BJ001) (Methylobacterium populi).